Here is a 427-residue protein sequence, read N- to C-terminus: Peptidase B (427 aa).

Mn(2+)-binding residues include Lys-195 and Asp-200. Lys-207 is a catalytic residue. The Mn(2+) site is built by Asp-218, Asp-277, and Glu-279. Arg-281 is a catalytic residue.

Belongs to the peptidase M17 family. Homohexamer. Mn(2+) is required as a cofactor.

It localises to the cytoplasm. It carries out the reaction Release of an N-terminal amino acid, Xaa, from a peptide or arylamide. Xaa is preferably Glu or Asp but may be other amino acids, including Leu, Met, His, Cys and Gln.. Its function is as follows. Probably plays an important role in intracellular peptide degradation. The protein is Peptidase B of Salmonella arizonae (strain ATCC BAA-731 / CDC346-86 / RSK2980).